Reading from the N-terminus, the 158-residue chain is NADPH-dependent 7-cyano-7-deazaguanine reductase (158 aa).

The active-site Thioimide intermediate is Cys-56. The Proton donor role is filled by Asp-63. Substrate-binding positions include Val-78 to Ser-80 and His-97 to Glu-98.

This sequence belongs to the GTP cyclohydrolase I family. QueF type 1 subfamily.

It is found in the cytoplasm. It carries out the reaction 7-aminomethyl-7-carbaguanine + 2 NADP(+) = 7-cyano-7-deazaguanine + 2 NADPH + 3 H(+). The protein operates within tRNA modification; tRNA-queuosine biosynthesis. In terms of biological role, catalyzes the NADPH-dependent reduction of 7-cyano-7-deazaguanine (preQ0) to 7-aminomethyl-7-deazaguanine (preQ1). This Rhodopseudomonas palustris (strain HaA2) protein is NADPH-dependent 7-cyano-7-deazaguanine reductase.